We begin with the raw amino-acid sequence, 282 residues long: Acetyl-coenzyme A carboxylase carboxyl transferase subunit beta (282 aa).

One can recognise a CoA carboxyltransferase N-terminal domain in the interval 25 to 282 (LWTKCVSCGE…SSILTMLYRP (258 aa)). 4 residues coordinate Zn(2+): cysteine 29, cysteine 32, cysteine 48, and cysteine 51. The segment at 29–51 (CVSCGETIYTKDIENNLNVCPKC) adopts a C4-type zinc-finger fold.

This sequence belongs to the AccD/PCCB family. As to quaternary structure, acetyl-CoA carboxylase is a heterohexamer composed of biotin carboxyl carrier protein (AccB), biotin carboxylase (AccC) and two subunits each of ACCase subunit alpha (AccA) and ACCase subunit beta (AccD). Zn(2+) is required as a cofactor.

The protein localises to the cytoplasm. It catalyses the reaction N(6)-carboxybiotinyl-L-lysyl-[protein] + acetyl-CoA = N(6)-biotinyl-L-lysyl-[protein] + malonyl-CoA. It functions in the pathway lipid metabolism; malonyl-CoA biosynthesis; malonyl-CoA from acetyl-CoA: step 1/1. Component of the acetyl coenzyme A carboxylase (ACC) complex. Biotin carboxylase (BC) catalyzes the carboxylation of biotin on its carrier protein (BCCP) and then the CO(2) group is transferred by the transcarboxylase to acetyl-CoA to form malonyl-CoA. This is Acetyl-coenzyme A carboxylase carboxyl transferase subunit beta from Citrifermentans bemidjiense (strain ATCC BAA-1014 / DSM 16622 / JCM 12645 / Bem) (Geobacter bemidjiensis).